A 358-amino-acid chain; its full sequence is Probable BOI-related E3 ubiquitin-protein ligase 2 (358 aa).

Residues 171 to 234 adopt a coiled-coil conformation; it reads KYEIEEKRKR…NQIWRDLAQT (64 aa). The WRD domain stretch occupies residues 214-250; the sequence is LEERVKSLSIENQIWRDLAQTNEATANHLRTNLEHVL. An RING-type zinc finger spans residues 310–345; that stretch reads CRNCGEEESCVLLLPCRHLCLCGVCGSSVHTCPICT.

As to quaternary structure, interacts with the DELLA proteins GAI, RGA, RGL1, RGL2 and RGL3.

The enzyme catalyses S-ubiquitinyl-[E2 ubiquitin-conjugating enzyme]-L-cysteine + [acceptor protein]-L-lysine = [E2 ubiquitin-conjugating enzyme]-L-cysteine + N(6)-ubiquitinyl-[acceptor protein]-L-lysine.. Its pathway is protein degradation; proteasomal ubiquitin-dependent pathway. Probable E3 ubiquitin-protein ligase. Has no effect on the stability of the DELLA proteins. This is Probable BOI-related E3 ubiquitin-protein ligase 2 (BRG2) from Arabidopsis thaliana (Mouse-ear cress).